Reading from the N-terminus, the 288-residue chain is Protoheme IX farnesyltransferase (288 aa).

9 helical membrane passes run 16–36 (VWSLLVFVGAIGAVIAIPYFN), 37–57 (LHYISLIVLATIAVMLGSMGA), 88–108 (INGLLFGLVLMFLSIAILAAF), 111–131 (LYAALFMGIGLFDNVFIYSYL), 138–158 (WNIILGGFSGGFPVVIGWYTV), 162–182 (FSILPWFLFLLVVVWIPIHVW), 210–230 (AICISSAAIILFAFSIIPAFF), 236–256 (VYMILASAIAVPMIFYSIVFV), and 265–285 (LKLFIYSSPYLAIIFVLVLIF).

It belongs to the UbiA prenyltransferase family. Protoheme IX farnesyltransferase subfamily.

It is found in the cell membrane. It carries out the reaction heme b + (2E,6E)-farnesyl diphosphate + H2O = Fe(II)-heme o + diphosphate. Its pathway is porphyrin-containing compound metabolism; heme O biosynthesis; heme O from protoheme: step 1/1. Functionally, converts heme B (protoheme IX) to heme O by substitution of the vinyl group on carbon 2 of heme B porphyrin ring with a hydroxyethyl farnesyl side group. This Thermoplasma acidophilum (strain ATCC 25905 / DSM 1728 / JCM 9062 / NBRC 15155 / AMRC-C165) protein is Protoheme IX farnesyltransferase.